A 225-amino-acid polypeptide reads, in one-letter code: Fibronectin type III domain-containing protein (225 aa).

A signal peptide spans 1–17; it reads MFSFGIILLTVVSFTNA. Positions 106 to 206 constitute a Fibronectin type-III domain; that stretch reads PPTNVIVEST…MPLNVKTPDI (101 aa).

Component of the organic matrix of calcified shell layers like nacre and prisms.

The protein resides in the secreted. The sequence is that of Fibronectin type III domain-containing protein from Mytilus californianus (California mussel).